The primary structure comprises 571 residues: Urease subunit alpha (571 aa).

One can recognise a Urease domain in the interval 131 to 571; that stretch reads GGIDAHIHFI…LPMAQRYFLF (441 aa). His136, His138, and Lys219 together coordinate Ni(2+). At Lys219 the chain carries N6-carboxylysine. His221 is a substrate binding site. His248 and His274 together coordinate Ni(2+). His322 serves as the catalytic Proton donor. Asp362 contacts Ni(2+).

The protein belongs to the metallo-dependent hydrolases superfamily. Urease alpha subunit family. Heterotrimer of UreA (gamma), UreB (beta) and UreC (alpha) subunits. Three heterotrimers associate to form the active enzyme. It depends on Ni cation as a cofactor. Carboxylation allows a single lysine to coordinate two nickel ions.

The protein localises to the cytoplasm. The catalysed reaction is urea + 2 H2O + H(+) = hydrogencarbonate + 2 NH4(+). It participates in nitrogen metabolism; urea degradation; CO(2) and NH(3) from urea (urease route): step 1/1. In Nostoc punctiforme (strain ATCC 29133 / PCC 73102), this protein is Urease subunit alpha.